Consider the following 123-residue polypeptide: U11/U12 small nuclear ribonucleoprotein 25 kDa protein (123 aa).

The region spanning 32 to 123 (MTVRVCKMDG…VSFIKKLRQK (92 aa)) is the Ubiquitin-like domain.

In terms of assembly, component of the U11/U12 snRNPs that are part of the U12-type spliceosome.

It localises to the nucleus. This chain is U11/U12 small nuclear ribonucleoprotein 25 kDa protein (SNRNP25), found in Bos taurus (Bovine).